The sequence spans 512 residues: Cytoplasmic tRNA 2-thiolation protein 2-A (512 aa).

Belongs to the CTU2/NCS2 family.

The protein resides in the cytoplasm. It participates in tRNA modification; 5-methoxycarbonylmethyl-2-thiouridine-tRNA biosynthesis. Plays a central role in 2-thiolation of mcm(5)S(2)U at tRNA wobble positions of tRNA(Lys), tRNA(Glu) and tRNA(Gln). May act by forming a heterodimer with ctu1/atpbd3 that ligates sulfur from thiocarboxylated urm1 onto the uridine of tRNAs at wobble position. This is Cytoplasmic tRNA 2-thiolation protein 2-A (ctu2-a) from Xenopus laevis (African clawed frog).